A 101-amino-acid polypeptide reads, in one-letter code: Thyrotropin subunit beta (101 aa).

Intrachain disulfides connect Cys2/Cys88, Cys10/Cys66, Cys14/Cys68, and Cys71/Cys78. Asn6 carries an N-linked (GlcNAc...) asparagine glycan.

Belongs to the glycoprotein hormones subunit beta family. As to quaternary structure, heterodimer of a common alpha chain and a unique beta chain which confers biological specificity to thyrotropin, lutropin, follitropin and gonadotropin.

The protein resides in the secreted. Indispensable for the control of thyroid structure and metabolism. The polypeptide is Thyrotropin subunit beta (TSHB) (Phodopus sungorus (Striped hairy-footed hamster)).